The chain runs to 181 residues: Adenylate kinase (181 aa).

Residue 10–15 (GAGKGT) coordinates ATP. Residues 30-59 (STGDLFRSNISEGTELGLQAKQYLDAGDLV) are NMP. AMP is bound by residues Thr31, Arg36, 57 to 59 (DLV), 85 to 88 (GFPR), and Gln92. The segment at 126–132 (GRGRADD) is LID. Arg127 is an ATP binding site. Arg129 and Arg140 together coordinate AMP. Gly166 lines the ATP pocket.

This sequence belongs to the adenylate kinase family. As to quaternary structure, monomer.

The protein localises to the cytoplasm. It catalyses the reaction AMP + ATP = 2 ADP. The protein operates within purine metabolism; AMP biosynthesis via salvage pathway; AMP from ADP: step 1/1. Functionally, catalyzes the reversible transfer of the terminal phosphate group between ATP and AMP. Plays an important role in cellular energy homeostasis and in adenine nucleotide metabolism. In Mycobacteroides abscessus (strain ATCC 19977 / DSM 44196 / CCUG 20993 / CIP 104536 / JCM 13569 / NCTC 13031 / TMC 1543 / L948) (Mycobacterium abscessus), this protein is Adenylate kinase.